The sequence spans 266 residues: Small ribosomal subunit protein eS1 (266 aa).

The interval G236–V266 is disordered. A compositionally biased stretch (basic and acidic residues) spans T244–G257.

The protein belongs to the eukaryotic ribosomal protein eS1 family. In terms of assembly, component of the small ribosomal subunit. Mature ribosomes consist of a small (40S) and a large (60S) subunit. The 40S subunit contains about 33 different proteins and 1 molecule of RNA (18S). The 60S subunit contains about 49 different proteins and 3 molecules of RNA (28S, 5.8S and 5S). Part of the small subunit (SSU) processome, composed of more than 70 proteins and the RNA chaperone small nucleolar RNA (snoRNA) U3.

It localises to the cytoplasm. The protein localises to the nucleus. The protein resides in the nucleolus. Component of the small ribosomal subunit. The ribosome is a large ribonucleoprotein complex responsible for the synthesis of proteins in the cell. Part of the small subunit (SSU) processome, first precursor of the small eukaryotic ribosomal subunit. During the assembly of the SSU processome in the nucleolus, many ribosome biogenesis factors, an RNA chaperone and ribosomal proteins associate with the nascent pre-rRNA and work in concert to generate RNA folding, modifications, rearrangements and cleavage as well as targeted degradation of pre-ribosomal RNA by the RNA exosome. May play a role during erythropoiesis. The sequence is that of Small ribosomal subunit protein eS1 (rps3a) from Tetraodon nigroviridis (Spotted green pufferfish).